The primary structure comprises 340 residues: Phosphoribosylformylglycinamidine cyclo-ligase (340 aa).

Belongs to the AIR synthase family.

It localises to the cytoplasm. It carries out the reaction 2-formamido-N(1)-(5-O-phospho-beta-D-ribosyl)acetamidine + ATP = 5-amino-1-(5-phospho-beta-D-ribosyl)imidazole + ADP + phosphate + H(+). It functions in the pathway purine metabolism; IMP biosynthesis via de novo pathway; 5-amino-1-(5-phospho-D-ribosyl)imidazole from N(2)-formyl-N(1)-(5-phospho-D-ribosyl)glycinamide: step 2/2. The sequence is that of Phosphoribosylformylglycinamidine cyclo-ligase from Streptococcus pneumoniae serotype 4 (strain ATCC BAA-334 / TIGR4).